We begin with the raw amino-acid sequence, 358 residues long: Src kinase-associated phosphoprotein 2 (358 aa).

Residues serine 5 and serine 9 each carry the phosphoserine modification. Residues 14 to 64 (PEEIRNLLADVETFVADTLKGENLSKKAKEKRESLIKKIKDVKSVYLQEFQ) form a homodimerization region. Phosphotyrosine is present on tyrosine 75. A phosphoserine mark is found at serine 87 and serine 90. The 104-residue stretch at 116–219 (FVIKAGYLEK…WVQQLKFILQ (104 aa)) folds into the PH domain. Phosphotyrosine is present on residues tyrosine 151 and tyrosine 197. Serine 223 is modified (phosphoserine). Residues 232-292 (ERGELYDDVD…RDSVHHTSGD (61 aa)) are disordered. Acidic residues predominate over residues 255–270 (IDDEIYEELPEEEEDT). A Phosphotyrosine; by FYN modification is found at tyrosine 260. 3 positions are modified to phosphoserine: serine 272, serine 282, and serine 285. Basic and acidic residues predominate over residues 274-292 (KMDEQGKGSRDSVHHTSGD). The SH3 domain occupies 296–357 (DYANFYQGLW…PKAYLMEMYD (62 aa)).

This sequence belongs to the SKAP family. As to quaternary structure, interacts with LAT, GRB2, PTK2B and PRAM1. Homodimer. Interacts with FYB1, which is required for SKAP2 protein stability. Interacts with PTPNS1. Part of a complex consisting of SKAP2, FYB1 and PTPNS1. Part of a complex consisting of SKAP2, FYB1 and PIRB. May interact with actin. May interact with FYN, HCK and LYN. Interacts with FASLG. Dephosphorylated on Tyr-75 by PTPN22. Phosphorylated by FYN on Tyr-260. In case of infection with Y.pseudotuberculosis, dephosphorylated by bacterial phosphatase yopH. In terms of tissue distribution, expressed in kidney, lung, liver, spleen, bone marrow and testis. Present in T-cells, B-cells, and all cells of the myelomonocytic lineage. Present in all brain regions, with highest levels in neurons from the Purkinje cell layer, hippocampal gyrus, cortex and substantia nigra (at protein level).

Its subcellular location is the cytoplasm. In terms of biological role, may be involved in B-cell and macrophage adhesion processes. In B-cells, may act by coupling the B-cell receptor (BCR) to integrin activation. May play a role in src signaling pathway. In Mus musculus (Mouse), this protein is Src kinase-associated phosphoprotein 2 (Skap2).